We begin with the raw amino-acid sequence, 124 residues long: Glycine cleavage system H protein (124 aa).

Residues 22–104 form the Lipoyl-binding domain; it reads LVITGITDHA…YGKGWIYKIK (83 aa). Residue Lys63 is modified to N6-lipoyllysine.

This sequence belongs to the GcvH family. The glycine cleavage system is composed of four proteins: P, T, L and H. Requires (R)-lipoate as cofactor.

Functionally, the glycine cleavage system catalyzes the degradation of glycine. The H protein shuttles the methylamine group of glycine from the P protein to the T protein. The sequence is that of Glycine cleavage system H protein from Acinetobacter baumannii (strain ACICU).